The sequence spans 110 residues: DNA-binding protein Tneu_1679 (110 aa).

This sequence belongs to the PDCD5 family.

The protein is DNA-binding protein Tneu_1679 of Pyrobaculum neutrophilum (strain DSM 2338 / JCM 9278 / NBRC 100436 / V24Sta) (Thermoproteus neutrophilus).